The sequence spans 459 residues: MPSNVRSGVLTLLHTACGAGVLAMPFAFKPFGLMPGLITLTFCGICSLCGLLLQTRIAKYVPKSENASFAKLTQLINPSISVVFDFAIAVKCFGVGVSYLIIVGDLVPQIVQSIFYRNDDNMSGSQEHHMFLDRRLYITLIIVFVISPLCFKRSLNSLRYASMIAIVSVAYLSGLIIYHFVNRHQLERGQVYFMVPHGDSQSHSPLTTLPIFVFAYTCHHNMFSVINEQVDKSFKVIRRIPIFAIVLAYFLYIIIGGTGYMTFGENIVGNILTLYPNSISTTIGRLAMLLLVMLAFPLQCHPCRSSVKNIIIFIENFRKGKLYDNRASFIPLDNFNSEDPQEAPTQQNNEEPNLRSESLRHINIITLCILLFSYLLAISITSLAKVLAIVGATGSTSISFILPGLFGYKLIGSEFTGTNERVPTSIKIFKYLSLSLFIWGIAVMVASLSAIVFLGTSSH.

8 helical membrane-spanning segments follow: residues 8–28 (GVLT…PFAF), 33–53 (LMPG…GLLL), 82–102 (VVFD…YLII), 131–151 (FLDR…PLCF), 161–181 (ASMI…YHFV), 206–226 (LTTL…FSVI), 240–260 (IPIF…GTGY), and 278–298 (SIST…AFPL). Polar residues predominate over residues 335–351 (FNSEDPQEAPTQQNNEE). A disordered region spans residues 335–354 (FNSEDPQEAPTQQNNEEPNL). Helical transmembrane passes span 364–384 (IITL…TSLA), 386–406 (VLAI…PGLF), and 434–454 (LSLF…IVFL).

This sequence belongs to the amino acid/polyamine transporter 2 family.

Its subcellular location is the vacuole membrane. In terms of biological role, probable amino acid transporter of unknown specificity. This Saccharomyces cerevisiae (strain ATCC 204508 / S288c) (Baker's yeast) protein is Vacuolar amino acid transporter 5 (AVT5).